The chain runs to 541 residues: Protein wntless homolog (541 aa).

The first 42 residues, 1-42 (MAGAIIENMSTRKLCIVGGILLVFQVIAFLVGGLIAPSPTTA), serve as a signal peptide directing secretion. Residues 43–232 (VPYMSVKCID…GIHQNGGFTK (190 aa)) lie on the Lumenal side of the membrane. The chain crosses the membrane as a helical span at residues 233–253 (VWFAMKTFLTPSILIIMVWYW). Residues 254–268 (RRITLMTRAPVLLEK) lie on the Cytoplasmic side of the membrane. Residues 269 to 289 (VIFALGISMTFINIPVEWFSI) form a helical membrane-spanning segment. Residues 290–303 (GFDWTWMLLFGDIR) lie on the Lumenal side of the membrane. The helical transmembrane segment at 304–324 (QGIFYAMLLSFWIIFCGEHMM) threads the bilayer. Over 325–331 (DQNERNR) the chain is Cytoplasmic. Residues 332–352 (LSGYWKQVGPIAVGSFCLFIF) traverse the membrane as a helical segment. Over 353–380 (DMCERGVQLKNPFYSIWTTEVGTELAMA) the chain is Lumenal. A helical transmembrane segment spans residues 381 to 401 (FIIVAGICLCLYFLFLCFMVF). The Cytoplasmic segment spans residues 402 to 431 (QVFRNISGKQSSLPAMSKARRLHYEGLIFR). Residues 432–452 (FKFLMLITLACAAMTVIFFIV) form a helical membrane-spanning segment. Residues 453–471 (SQVTEGHWKWGDITIQVNS) lie on the Lumenal side of the membrane. Residues 472-492 (AFFTGIYGMWNLYVFALMFLY) traverse the membrane as a helical segment. The Cytoplasmic portion of the chain corresponds to 493–541 (APSHKNYGEDQSNGDLGVSSGEELQLTTTITHVDGPTEVYKLARKEAQE).

The protein belongs to the wntless family.

Its subcellular location is the golgi apparatus membrane. It localises to the cytoplasmic vesicle membrane. In terms of biological role, may play an essential role in Wnt signaling pathway. May be required for Wnt-dependent patterning processes. In Gallus gallus (Chicken), this protein is Protein wntless homolog (WLS).